A 501-amino-acid polypeptide reads, in one-letter code: Myosin heavy chain, embryonic smooth muscle isoform (501 aa).

Residues 1–457 adopt a coiled-coil conformation; sequence REAREKETKA…TLKNRLRRGG (457 aa). A rodlike tail (S2 and LMM domains) region spans residues 1 to 501; that stretch reads REAREKETKA…VNETQPPQSE (501 aa). Disordered regions lie at residues 182–202, 221–254, and 397–501; these read YQRELEEARGSRDEIFAQSKE, LASSERARRHAEQERDELADEIANSASGKSALLD, and MEKA…PQSE. A compositionally biased stretch (basic and acidic residues) spans 223 to 233; it reads SSERARRHAEQ. The span at 492–501 shows a compositional bias: polar residues; it reads VNETQPPQSE.

Muscle myosin is a hexameric protein that consists of 2 heavy chain subunits (MHC), 2 alkali light chain subunits (MLC) and 2 regulatory light chain subunits (MLC-2).

The protein localises to the cytoplasm. It localises to the myofibril. Muscle contraction. The chain is Myosin heavy chain, embryonic smooth muscle isoform from Oryctolagus cuniculus (Rabbit).